Reading from the N-terminus, the 567-residue chain is Probable transport protein (567 aa).

Over residues 1 to 30 (MSDRVEVNERRSDSVSEKEPARDDARKDVT) the composition is skewed to basic and acidic residues. A disordered region spans residues 1 to 38 (MSDRVEVNERRSDSVSEKEPARDDARKDVTDDQEDAPP). The Cytoplasmic segment spans residues 1–46 (MSDRVEVNERRSDSVSEKEPARDDARKDVTDDQEDAPPFMTANNAR). Residues 47 to 67 (VMLVQAIGGSLNGYSIGFVGV) form a helical membrane-spanning segment. The Extracellular portion of the chain corresponds to 68 to 160 (YSTLFGYSTN…PSGYSSSESG (93 aa)). The chain crosses the membrane as a helical span at residues 161 to 181 (IFAGSMIAGCLIGSVFAGPLA). Residues 182-189 (SKIGARLS) are Cytoplasmic-facing. Residues 190 to 210 (FLLVGLVGVVASVMYHASCAA) form a helical membrane-spanning segment. The Extracellular segment spans residues 211–212 (DE). Residues 213–233 (FWVLIVGRFVIGLFLGVICVA) form a helical membrane-spanning segment. The Cytoplasmic segment spans residues 234–249 (CPVYTDQNAHPKWKRT). A helical transmembrane segment spans residues 250–270 (IGVMFQVFTTLGIFVAALMGL). Residues 271-289 (ALGQSIRFDHDGDQKVMAR) lie on the Extracellular side of the membrane. A helical membrane pass occupies residues 290–310 (MQGLCVFSTLFSLLTVVLGIV). Topologically, residues 311–341 (TRESRAKFDGGEEGRAELNPSEYGYVEMIPR) are cytoplasmic. A helical transmembrane segment spans residues 342 to 362 (LLMGCVMAGTLQLTGINAVMN). Topologically, residues 363–366 (YAPT) are extracellular. A helical transmembrane segment spans residues 367–387 (IMGSLGLAPLVGNFVVMLWNF). Residues 388–404 (VTTLASIPLSYVFTMRH) lie on the Cytoplasmic side of the membrane. The helical transmembrane segment at 405–425 (VFLFGSIFTSCMCLFMCGIPV) threads the bilayer. Residues 426-437 (YPGVSKKLEAKN) lie on the Extracellular side of the membrane. A helical membrane pass occupies residues 438-458 (GVAITGILLFILGFEVCVGPC). Topologically, residues 459-480 (YYVLTQDMFPPSFRPRGASFTQ) are cytoplasmic. The chain crosses the membrane as a helical span at residues 481-501 (VAQFIFNLIINVCYPIATESI). The Extracellular portion of the chain corresponds to 502-514 (SGGPSGNQDKGQA). The helical transmembrane segment at 515–535 (VAFIFFGGLGLICFVIQVFFL) threads the bilayer. Over 536 to 567 (HPWDEERDGKKVVAPAIGKKELSEESIGNRAE) the chain is Cytoplasmic.

It belongs to the major facilitator superfamily. Sugar transporter (TC 2.A.1.1) family.

The protein localises to the membrane. Functionally, probable membrane transport protein. This chain is Probable transport protein (PRO-1), found in Leishmania enriettii.